A 449-amino-acid polypeptide reads, in one-letter code: Nucleoprotein (449 aa).

The segment at Met1–Ser55 is disordered. Residues Ser9–Gly22 are compositionally biased toward low complexity. Polar residues-rich tracts occupy residues Gln29 to Thr38 and Ser45 to Ser55. Residues Gln52 to Ser194 form an RNA-binding region. The region spanning Pro61–Gly190 is the CoV N NTD domain. The RNA site is built by Arg106, Arg122, and Arg164. Disordered stretches follow at residues Pro158–Asp231, Ile266–Gly297, and Met387–Ile449. Ser167 is modified (phosphoserine; by host). A Phosphothreonine; by host modification is found at Thr174. Ser191 is subject to Phosphoserine; by host. 2 stretches are compositionally biased toward polar residues: residues Ser194–Ala204 and Gly212–Gly227. Residues Ala259–Glu384 enclose the CoV N CTD domain. Residues Ile266–Pro276 are compositionally biased toward basic residues. Residues Ile266–Asp385 are dimerization. A Phosphoserine; by host modification is found at Ser391. Residues Gln400 to Val410 show a composition bias toward polar residues. Positions Lys423–Glu440 are enriched in basic and acidic residues. Ser424 is subject to Phosphoserine; by host. Thr428 is modified (phosphothreonine; by host).

This sequence belongs to the betacoronavirus nucleocapsid protein family. Homooligomer. Both monomeric and oligomeric forms interact with RNA. Interacts with protein M. Interacts with NSP3; this interaction serves to tether the genome to the newly translated replicase-transcriptase complex at a very early stage of infection. Post-translationally, ADP-ribosylated. The ADP-ribosylation is retained in the virion during infection. In terms of processing, phosphorylated on serine and threonine residues.

The protein localises to the virion. It is found in the host endoplasmic reticulum-Golgi intermediate compartment. It localises to the host Golgi apparatus. In terms of biological role, packages the positive strand viral genome RNA into a helical ribonucleocapsid (RNP) and plays a fundamental role during virion assembly through its interactions with the viral genome and membrane protein M. Plays an important role in enhancing the efficiency of subgenomic viral RNA transcription as well as viral replication. The sequence is that of Nucleoprotein from Sus scrofa (Pig).